The chain runs to 183 residues: Caltractin ICL1c (183 aa).

Residues 1–30 (MARRGQQPPPQQQQAPPTQKNQAGKFNPAE) form a disordered region. EF-hand domains follow at residues 39 to 74 (EEVL…LGFE), 75 to 110 (AKNQ…RISE), 112 to 147 (DSKA…LGET), and 148 to 183 (MDDS…KTFA). The Ca(2+) site is built by Asp52, Asp54, Thr56, Ser58, Glu63, Asp88, Asp90, Ser92, Gln94, and Glu99.

This sequence belongs to the centrin family. As to quaternary structure, monomer.

It is found in the cytoplasm. The protein resides in the cytoskeleton. Functionally, plays a fundamental role in microtubule organizing center structure and function. Component of the infraciliary lattice (ICL) and the ciliary basal bodies. The sequence is that of Caltractin ICL1c (Icl1c) from Paramecium tetraurelia.